A 521-amino-acid chain; its full sequence is Bifunctional purine biosynthesis protein PurH (521 aa).

Residues 1–150 enclose the MGS-like domain; the sequence is MSEDRKAIKR…KNHPSVAVVT (150 aa).

Belongs to the PurH family.

The enzyme catalyses (6R)-10-formyltetrahydrofolate + 5-amino-1-(5-phospho-beta-D-ribosyl)imidazole-4-carboxamide = 5-formamido-1-(5-phospho-D-ribosyl)imidazole-4-carboxamide + (6S)-5,6,7,8-tetrahydrofolate. It carries out the reaction IMP + H2O = 5-formamido-1-(5-phospho-D-ribosyl)imidazole-4-carboxamide. It functions in the pathway purine metabolism; IMP biosynthesis via de novo pathway; 5-formamido-1-(5-phospho-D-ribosyl)imidazole-4-carboxamide from 5-amino-1-(5-phospho-D-ribosyl)imidazole-4-carboxamide (10-formyl THF route): step 1/1. Its pathway is purine metabolism; IMP biosynthesis via de novo pathway; IMP from 5-formamido-1-(5-phospho-D-ribosyl)imidazole-4-carboxamide: step 1/1. In Corynebacterium efficiens (strain DSM 44549 / YS-314 / AJ 12310 / JCM 11189 / NBRC 100395), this protein is Bifunctional purine biosynthesis protein PurH.